The chain runs to 136 residues: ATP synthase epsilon chain (136 aa).

Positions Gly-112–Glu-136 are disordered. Residues Asp-116–Asn-125 show a composition bias toward basic and acidic residues.

This sequence belongs to the ATPase epsilon chain family. F-type ATPases have 2 components, CF(1) - the catalytic core - and CF(0) - the membrane proton channel. CF(1) has five subunits: alpha(3), beta(3), gamma(1), delta(1), epsilon(1). CF(0) has three main subunits: a, b and c.

It localises to the cellular thylakoid membrane. Produces ATP from ADP in the presence of a proton gradient across the membrane. The chain is ATP synthase epsilon chain from Prochlorococcus marinus (strain SARG / CCMP1375 / SS120).